The chain runs to 177 residues: tRNA-splicing endonuclease (177 aa).

Catalysis depends on residues Y114, H123, and K154.

This sequence belongs to the tRNA-intron endonuclease family. Archaeal short subfamily. In terms of assembly, homotetramer; although the tetramer contains four active sites, only two participate in the cleavage. Therefore, it should be considered as a dimer of dimers.

The catalysed reaction is pretRNA = a 3'-half-tRNA molecule with a 5'-OH end + a 5'-half-tRNA molecule with a 2',3'-cyclic phosphate end + an intron with a 2',3'-cyclic phosphate and a 5'-hydroxyl terminus.. Its function is as follows. Endonuclease that removes tRNA introns. Cleaves pre-tRNA at the 5'- and 3'-splice sites to release the intron. The products are an intron and two tRNA half-molecules bearing 2',3' cyclic phosphate and 5'-OH termini. Recognizes a pseudosymmetric substrate in which 2 bulged loops of 3 bases are separated by a stem of 4 bp. The sequence is that of tRNA-splicing endonuclease from Methanococcus vannielii (strain ATCC 35089 / DSM 1224 / JCM 13029 / OCM 148 / SB).